The primary structure comprises 128 residues: Large ribosomal subunit protein bL12 (128 aa).

It belongs to the bacterial ribosomal protein bL12 family. As to quaternary structure, homodimer. Part of the ribosomal stalk of the 50S ribosomal subunit. Forms a multimeric L10(L12)X complex, where L10 forms an elongated spine to which 2 to 4 L12 dimers bind in a sequential fashion. Binds GTP-bound translation factors.

Functionally, forms part of the ribosomal stalk which helps the ribosome interact with GTP-bound translation factors. Is thus essential for accurate translation. In Kocuria rhizophila (strain ATCC 9341 / DSM 348 / NBRC 103217 / DC2201), this protein is Large ribosomal subunit protein bL12.